Reading from the N-terminus, the 354-residue chain is DNA integrity scanning protein DisA (354 aa).

In terms of domain architecture, DAC spans 6–144 (GMKIKDTLKI…GDIKYVLRDS (139 aa)). ATP contacts are provided by residues Gly73, Leu91, and 104–108 (TRHRT).

Belongs to the DisA family. In terms of assembly, homooctamer. The cofactor is Mg(2+).

The enzyme catalyses 2 ATP = 3',3'-c-di-AMP + 2 diphosphate. Participates in a DNA-damage check-point that is active prior to asymmetric division when DNA is damaged. DisA forms globular foci that rapidly scan along the chromosomes during sporulation, searching for lesions. When a lesion is present, DisA pauses at the lesion site. This triggers a cellular response that culminates in a temporary block in sporulation initiation. Its function is as follows. Also has diadenylate cyclase activity, catalyzing the condensation of 2 ATP molecules into cyclic di-AMP (c-di-AMP). c-di-AMP acts as a signaling molecule that couples DNA integrity with progression of sporulation. The rise in c-di-AMP level generated by DisA while scanning the chromosome, operates as a positive signal that advances sporulation; upon encountering a lesion, the DisA focus arrests at the damaged site and halts c-di-AMP synthesis. In Clostridium botulinum (strain Alaska E43 / Type E3), this protein is DNA integrity scanning protein DisA.